A 713-amino-acid chain; its full sequence is MKTVTLATCNLNQWAMDFKGNLERIIESINIAKSKGAKYRLGPELEICGYGCEDHFLEQDTMLHCWQSLAVILKDPELTKDILVDVGMPVLHKDVRYNCRVILLNQKIYLIQPKKAMAMDGNYREGRWFTPWIKPRVVETFYLPRIISQITGQDECQIGDAIISTLDTAISSETCEELFTPNSPHIQMGLDGVEIFTNGSGSHHQLRKLDTRVDLIRSATSKSGGIYLYSNQQGCDGSRLYYDGSCMIMINGDCVSQGSQFSLVDIEVITATVDLEDVRSVRASFMARCAQANLTKEFPRVRCPIQLTHIDYCHPPDRVIHINYNTPAEEIGFGPACWLWDYLRRSGLSGYFLPLSGGADSAATAAIIGIMCQLVILDVSKGNKQVLKDAQRITNSPEDYIPTDSREFASRLFFTAYLGSKNSSKETRDRAMEIAKDIGSVHKEVDIDDISQSFNDAFSQITKKQPQFRAHGGTPRENLALQNVQARTRMVLSYHLASLLLWEQGRPGSLLVLGSANCDESLRGYMTKYDCSSADINPIGGMSKIDLRSFIEWAGKFRDMKSILSVLTATPTAELEPITENYTQSDEIDMGMTYEELSIFGKLRKVNRCGPVSMFERLVADWAHLEPSVVAEKVKRFFYYYAINRHKLTTLTPSYHAEGYSPDDNRYDHRQFLYNSKWDVQFETIDKIVLRLSQRPQLKNTVNCPNQASLTQQ.

The CN hydrolase domain maps to 4 to 275 (VTLATCNLNQ…IEVITATVDL (272 aa)). The active-site Proton acceptor; for glutaminase activity is Glu44. Catalysis depends on Lys114, which acts as the For glutaminase activity. Cys175 serves as the catalytic Nucleophile; for glutaminase activity. Residues 324–703 (YNTPAEEIGF…QRPQLKNTVN (380 aa)) are ligase. 354-361 (PLSGGADS) is a binding site for ATP. Ser356 is an active-site residue.

This sequence in the C-terminal section; belongs to the NAD synthetase family.

It catalyses the reaction deamido-NAD(+) + L-glutamine + ATP + H2O = L-glutamate + AMP + diphosphate + NAD(+) + H(+). The protein operates within cofactor biosynthesis; NAD(+) biosynthesis; NAD(+) from deamido-NAD(+) (L-Gln route): step 1/1. This is Glutamine-dependent NAD(+) synthetase (nadsyn1) from Dictyostelium discoideum (Social amoeba).